Consider the following 352-residue polypeptide: Minor capsid protein VP2 (352 aa).

Residue glycine 2 is the site of N-myristoyl glycine; by host attachment. A D1 region spans residues 273–308; it reads SGEFIEKTLAPGGANQRIAPQWMLPLLLGLYGTVTP. Residues 290–310 form a helical membrane-spanning segment; it reads IAPQWMLPLLLGLYGTVTPAL. Positions 312-352 are disordered; that stretch reads AYEDAPSKKKRRMSRGSSQKAKGPRASSKTSYKRRRRSTRS. The interval 313-352 is DNA-binding; sequence YEDAPSKKKRRMSRGSSQKAKGPRASSKTSYKRRRRSTRS. Positions 316-324 match the Nuclear localization signal motif; the sequence is APSKKKRRM. Over residues 342–352 the composition is skewed to basic residues; that stretch reads SYKRRRRSTRS.

The protein belongs to the polyomaviruses capsid protein VP2 family. Forms homooligomers, and heterooligomers with VP3 in the endoplasmic reticulum membrane. Interacts (via D1 domain) with VP1. As to quaternary structure, interacts (via D1 domain) with VP1.

The protein localises to the virion. It is found in the host nucleus. Its subcellular location is the host endoplasmic reticulum. The protein resides in the host endoplasmic reticulum membrane. In terms of biological role, structural protein that resides within the core of the capsid surrounded by 72 VP1 pentamers. Participates in host cell receptor binding together with VP1. Following virus endocytosis and trafficking to the endoplasmic reticulum, VP2 and VP3 form oligomers and integrate into the endoplasmic reticulum membrane. Heterooligomer VP2-VP3 may create a viroporin for transporting the viral genome across the endoplasmic reticulum membrane to the cytoplasm. Nuclear entry of the viral DNA involves the selective exposure and importin recognition of VP2 or VP3 nuclear localization signal (shared C-terminus). Plays a role in virion assembly within the nucleus in particular through a DNA-binding domain located in the C-terminal region. An N-terminal myristoylation suggests a scaffold function for virion assembly. Structural protein that resides within the core of the capsid surrounded by 72 VP1 pentamers. Following virus endocytosis and trafficking to the endoplasmic reticulum, VP2 and VP3 form oligomers and integrate into the endoplasmic reticulum membrane. Heterooligomer VP2-VP3 may create a viroporin for transporting the viral genome across the endoplasmic reticulum membrane to the cytoplasm. Nuclear entry of the viral DNA involves the selective exposure and importin recognition of VP2 or VP3 nuclear localization signal (shared C-terminus). Plays a role in virion assembly within the nucleus. May participate in host cell lysis when associated with VP4. Its function is as follows. Viroporin inducing perforation of cellular membranes to trigger virus progeny release. Forms pores of 3 nm inner diameter. VP4 is expressed about 24 hours after the late structural proteins and is not incorporated into the mature virion. This is Minor capsid protein VP2 from Simian virus 12 (strain wt100) (SV-12).